The following is a 242-amino-acid chain: MRKQIVADNIHGETGLDGPVFESLTRQAESTHAVKYIIDTLMASDGDITLVPVGPLSNIAVAMRMQPAILPKIREIVLMGGAYGTGNFTPSAEFNIFADPEAARVVFTSGVPLVMIGLDLTNQTVCTPDVIARMERAGGPAGELFSDIMNFTLKTQFENYGLAGGPVHDATCIGYLINPDGIKTQEMYVEVDVNSGPCYGRTVCDELGVLGKPANTKVGITIDTDWFWGLVEECVRGYIKTH.

Residues Gln-156 and His-168 each contribute to the substrate site.

Belongs to the IUNH family. RihB subfamily.

It catalyses the reaction a pyrimidine ribonucleoside + H2O = a pyrimidine nucleobase + D-ribose. This chain is Putative pyrimidine-specific ribonucleoside hydrolase RihB (rihB), found in Shigella boydii serotype 4 (strain Sb227).